The following is a 463-amino-acid chain: tRNA modification GTPase MnmE (463 aa).

(6S)-5-formyl-5,6,7,8-tetrahydrofolate-binding residues include Arg29, Glu91, and Arg130. In terms of domain architecture, TrmE-type G spans 225–384 (GLKVAIVGRP…LETAILEIVQ (160 aa)). Asn235 serves as a coordination point for K(+). GTP is bound by residues 235–240 (NVGKSS), 254–260 (TDLPGTT), and 279–282 (DTAG). Ser239 provides a ligand contact to Mg(2+). Positions 254, 256, and 259 each coordinate K(+). Thr260 serves as a coordination point for Mg(2+). Position 463 (Lys463) interacts with (6S)-5-formyl-5,6,7,8-tetrahydrofolate.

It belongs to the TRAFAC class TrmE-Era-EngA-EngB-Septin-like GTPase superfamily. TrmE GTPase family. Homodimer. Heterotetramer of two MnmE and two MnmG subunits. The cofactor is K(+).

The protein resides in the cytoplasm. In terms of biological role, exhibits a very high intrinsic GTPase hydrolysis rate. Involved in the addition of a carboxymethylaminomethyl (cmnm) group at the wobble position (U34) of certain tRNAs, forming tRNA-cmnm(5)s(2)U34. This chain is tRNA modification GTPase MnmE, found in Trichormus variabilis (strain ATCC 29413 / PCC 7937) (Anabaena variabilis).